Reading from the N-terminus, the 422-residue chain is Glutamate-1-semialdehyde 2,1-aminomutase (422 aa).

Residue Lys-258 is modified to N6-(pyridoxal phosphate)lysine.

It belongs to the class-III pyridoxal-phosphate-dependent aminotransferase family. HemL subfamily. As to quaternary structure, homodimer. It depends on pyridoxal 5'-phosphate as a cofactor.

It is found in the cytoplasm. The catalysed reaction is (S)-4-amino-5-oxopentanoate = 5-aminolevulinate. It participates in porphyrin-containing compound metabolism; protoporphyrin-IX biosynthesis; 5-aminolevulinate from L-glutamyl-tRNA(Glu): step 2/2. The polypeptide is Glutamate-1-semialdehyde 2,1-aminomutase (Chlamydia trachomatis serovar L2 (strain ATCC VR-902B / DSM 19102 / 434/Bu)).